Consider the following 244-residue polypeptide: Phosphoribosyl isomerase A (244 aa).

The active-site Proton acceptor is the D10. The active-site Proton donor is the D129.

It belongs to the HisA/HisF family.

The protein localises to the cytoplasm. It catalyses the reaction 1-(5-phospho-beta-D-ribosyl)-5-[(5-phospho-beta-D-ribosylamino)methylideneamino]imidazole-4-carboxamide = 5-[(5-phospho-1-deoxy-D-ribulos-1-ylimino)methylamino]-1-(5-phospho-beta-D-ribosyl)imidazole-4-carboxamide. The enzyme catalyses N-(5-phospho-beta-D-ribosyl)anthranilate = 1-(2-carboxyphenylamino)-1-deoxy-D-ribulose 5-phosphate. It participates in amino-acid biosynthesis; L-histidine biosynthesis; L-histidine from 5-phospho-alpha-D-ribose 1-diphosphate: step 4/9. It functions in the pathway amino-acid biosynthesis; L-tryptophan biosynthesis; L-tryptophan from chorismate: step 3/5. Its function is as follows. Involved in both the histidine and tryptophan biosynthetic pathways. This Mycobacterium tuberculosis (strain CDC 1551 / Oshkosh) protein is Phosphoribosyl isomerase A (priA).